We begin with the raw amino-acid sequence, 358 residues long: Microbial Terpene synthase-like protein 13 (358 aa).

Belongs to the terpene synthase family.

Functionally, no terpene synthase activity detected in vitro. This is Microbial Terpene synthase-like protein 13 from Selaginella moellendorffii (Spikemoss).